The sequence spans 209 residues: HTLV-1 basic zipper factor (209 aa).

The tract at residues 48–162 (DGLLSLEEES…SARKEKMQEL (115 aa)) is disordered. 2 stretches are compositionally biased toward basic and acidic residues: residues 70–87 (APPRGETHRDRQRRAEEK) and 94–114 (REKEEEKQTAEYLKRKEEEKA). Positions 87 to 92 (KRKRKK) match the Nuclear localization signal 1 motif. Short sequence motifs (nuclear localization signal) lie at residues 116 to 120 (RRRRA) and 137 to 141 (RRERK). Residues 122–160 (KKAADVARRKQEEQERRERKWRQGAEKAKQHSARKEKMQ) show a composition bias toward basic and acidic residues.

Belongs to the HTLV-1 HBZ protein family. In terms of assembly, interacts with host ATF4; this interaction inhibits viral RNA transcriptional activation by preventing ATF4 binding to Tax-responsive elements. Interacts with host CREB1; this interaction inhibits host CREB1 transcriptional activity. Interacts with host JUN, JUNB and JUND. Interacts with host EP300.

It is found in the host nucleus. Contributes to the regulation of viral RNA transcription by interacting with host proteins involved in transcriptional activation such as ATF4, or CREB1, and by inhibiting their activity. Additionally, HBZ suppresses host NF-kappa-B-driven transcription mediated by host RELA as well as transcription of some classical NF-kappa-B target genes, including IL8, IL2RA, IRF4, VCAM1, and VEGFA. This chain is HTLV-1 basic zipper factor (HBZ), found in Homo sapiens (Human).